Reading from the N-terminus, the 445-residue chain is Phosphoglucosamine mutase (445 aa).

The active-site Phosphoserine intermediate is the serine 102. The Mg(2+) site is built by serine 102, aspartate 241, aspartate 243, and aspartate 245. A Phosphoserine modification is found at serine 102.

It belongs to the phosphohexose mutase family. Mg(2+) serves as cofactor. In terms of processing, activated by phosphorylation.

It carries out the reaction alpha-D-glucosamine 1-phosphate = D-glucosamine 6-phosphate. Its function is as follows. Catalyzes the conversion of glucosamine-6-phosphate to glucosamine-1-phosphate. This chain is Phosphoglucosamine mutase, found in Shigella boydii serotype 4 (strain Sb227).